The chain runs to 105 residues: Malonate decarboxylase acyl carrier protein (105 aa).

At Ser-28 the chain carries O-(phosphoribosyl dephospho-coenzyme A)serine.

This sequence belongs to the MdcC family. In terms of processing, covalently binds the prosthetic group of malonate decarboxylase.

It is found in the cytoplasm. Functionally, subunit of malonate decarboxylase, it is an acyl carrier protein to which acetyl and malonyl thioester residues are bound via a 2'-(5''-phosphoribosyl)-3'-dephospho-CoA prosthetic group and turn over during the catalytic mechanism. The protein is Malonate decarboxylase acyl carrier protein of Xanthomonas campestris pv. campestris (strain 8004).